Reading from the N-terminus, the 157-residue chain is Transcriptional regulator MraZ (157 aa).

2 SpoVT-AbrB domains span residues 7–54 and 83–126; these read TYTM…GTSL and TEML…EPER.

It belongs to the MraZ family. In terms of assembly, forms oligomers.

It localises to the cytoplasm. The protein resides in the nucleoid. The polypeptide is Transcriptional regulator MraZ (Azorhizobium caulinodans (strain ATCC 43989 / DSM 5975 / JCM 20966 / LMG 6465 / NBRC 14845 / NCIMB 13405 / ORS 571)).